A 354-amino-acid chain; its full sequence is Methylthioribose-1-phosphate isomerase (354 aa).

Residues 58-60, Arg101, and Gln204 contribute to the substrate site; that span reads RGA. Asp245 serves as the catalytic Proton donor. 255–256 lines the substrate pocket; that stretch reads NK.

Belongs to the eIF-2B alpha/beta/delta subunits family. MtnA subfamily.

The enzyme catalyses 5-(methylsulfanyl)-alpha-D-ribose 1-phosphate = 5-(methylsulfanyl)-D-ribulose 1-phosphate. It participates in amino-acid biosynthesis; L-methionine biosynthesis via salvage pathway; L-methionine from S-methyl-5-thio-alpha-D-ribose 1-phosphate: step 1/6. Catalyzes the interconversion of methylthioribose-1-phosphate (MTR-1-P) into methylthioribulose-1-phosphate (MTRu-1-P). In Xylella fastidiosa (strain M23), this protein is Methylthioribose-1-phosphate isomerase.